The sequence spans 137 residues: Bombinin-like peptides 2 (137 aa).

The first 18 residues, 1–18 (MNFKYIVAVSILIASAYA), serve as a signal peptide directing secretion. Asparagine amide is present on Asn-70. A disordered region spans residues 92–112 (DSLEHPEEASEKETRGFNQEE). Isoleucine amide is present on Ile-136.

Belongs to the bombinin family. Expressed by the skin glands.

Its subcellular location is the secreted. In terms of biological role, bombinin-like peptide 2 has antimicrobial activity, but no hemolytic activity. Preliminary evidence indicates that this peptide does not lyse and thus kill the bacteria by its antimicrobial activity. Bombinin H2 has antibacterial and hemolytic activity. In Bombina variegata (Yellow-bellied toad), this protein is Bombinin-like peptides 2.